The primary structure comprises 247 residues: Carboxy-S-adenosyl-L-methionine synthase (247 aa).

Residues Y39, 89-90 (DN), 117-118 (DI), N132, and R199 each bind S-adenosyl-L-methionine.

Belongs to the class I-like SAM-binding methyltransferase superfamily. Cx-SAM synthase family. As to quaternary structure, homodimer.

The catalysed reaction is prephenate + S-adenosyl-L-methionine = carboxy-S-adenosyl-L-methionine + 3-phenylpyruvate + H2O. Functionally, catalyzes the conversion of S-adenosyl-L-methionine (SAM) to carboxy-S-adenosyl-L-methionine (Cx-SAM). This is Carboxy-S-adenosyl-L-methionine synthase from Sodalis glossinidius (strain morsitans).